The sequence spans 588 residues: Ankyrin repeat protein OPG003 (588 aa).

5 ANK repeats span residues 69–101 (CGNSPLHCYTMNTRFNPSVLKILLRHGMRNFDS), 175–223 (DGLT…NINA), 227–259 (IGNTPLHTYLQQYTKHSPRVVYALLSRGADTRI), 300–336 (EGQHLLYLFIKHNQGYGSRSLNILRYLLDRFDIQKDE), and 339–368 (NTMTPLHTAFQNCNNNVASYLVYIGYDINL). A PRANC/F-box-like region spans residues 557 to 574 (LPPEIMRNIITKLSDYHL).

The protein belongs to the orthopoxvirus OPG003 family.

Its function is as follows. May be involved in virus-host protein interaction through the ankyrin repeats and PRANC regions. In Cynomys gunnisoni (Gunnison's prairie dog), this protein is Ankyrin repeat protein OPG003 (OPG003).